The primary structure comprises 122 residues: Vitelline membrane protein Vm32E (122 aa).

An N-terminal signal peptide occupies residues 1 to 19 (MKTVAFLAVVVLFAAFACA). Residues 40-79 (SVPAPPCPKNYLFSCQPNLVPAPCAQQAAPAAYGSAGAYT) form the VM domain.

Belongs to the vitelline membrane family.

The protein localises to the secreted. Major early eggshell protein. In Drosophila persimilis (Fruit fly), this protein is Vitelline membrane protein Vm32E.